Reading from the N-terminus, the 132-residue chain is MSVSDPLGDMLTRIRNAVGRKKTKVSTPASKLRARVLDVLQAEGYIRGYTQSEFENGKAEIEIELKYYEGVPVIREITRVSKPGRRVYVSVKSIPQVANGLGISILSTPKGVMADHEAREQNVGGELLCRIF.

The protein belongs to the universal ribosomal protein uS8 family. In terms of assembly, part of the 30S ribosomal subunit. Contacts proteins S5 and S12.

In terms of biological role, one of the primary rRNA binding proteins, it binds directly to 16S rRNA central domain where it helps coordinate assembly of the platform of the 30S subunit. In Brucella ovis (strain ATCC 25840 / 63/290 / NCTC 10512), this protein is Small ribosomal subunit protein uS8.